Consider the following 292-residue polypeptide: 4-hydroxybenzoate octaprenyltransferase (292 aa).

The next 8 membrane-spanning stretches (helical) occupy residues 20 to 40 (IGILLLLWPTLWGLWLAADGM), 43 to 63 (PMILVIFILGTILMRSAGCAI), 94 to 114 (LLIAAGLSLCAFLLILPLNLL), 135 to 155 (FFAMPQAYLGIAFSFGIPMAF), 160 to 180 (GTVPPLAWLLVLANLFWVIAY), 209 to 229 (VAGILLCHIIFLSTLTYAGIL), 234 to 254 (IWFYGALLVALGLVIVQYGMI), and 266 to 286 (FLHNNWIGAVIFAGILLDTLF).

It belongs to the UbiA prenyltransferase family. Mg(2+) is required as a cofactor.

It is found in the cell inner membrane. The enzyme catalyses all-trans-octaprenyl diphosphate + 4-hydroxybenzoate = 4-hydroxy-3-(all-trans-octaprenyl)benzoate + diphosphate. The protein operates within cofactor biosynthesis; ubiquinone biosynthesis. Functionally, catalyzes the prenylation of para-hydroxybenzoate (PHB) with an all-trans polyprenyl group. Mediates the second step in the final reaction sequence of ubiquinone-8 (UQ-8) biosynthesis, which is the condensation of the polyisoprenoid side chain with PHB, generating the first membrane-bound Q intermediate 3-octaprenyl-4-hydroxybenzoate. The sequence is that of 4-hydroxybenzoate octaprenyltransferase from Nitrosomonas europaea (strain ATCC 19718 / CIP 103999 / KCTC 2705 / NBRC 14298).